The sequence spans 508 residues: Photosystem II CP47 reaction center protein (508 aa).

The next 6 helical transmembrane spans lie at 21 to 36 (AVHI…WAGS), 101 to 115 (IVFS…IWHW), 140 to 156 (GIHL…FGAF), 203 to 218 (IAAG…FHLS), 237 to 252 (VLSS…AFVV), and 457 to 472 (SFAL…HGAR).

Belongs to the PsbB/PsbC family. PsbB subfamily. In terms of assembly, PSII is composed of 1 copy each of membrane proteins PsbA, PsbB, PsbC, PsbD, PsbE, PsbF, PsbH, PsbI, PsbJ, PsbK, PsbL, PsbM, PsbT, PsbX, PsbY, PsbZ, Psb30/Ycf12, at least 3 peripheral proteins of the oxygen-evolving complex and a large number of cofactors. It forms dimeric complexes. Interacts with PAM68. Interacts with HHL1. Binds multiple chlorophylls. PSII binds additional chlorophylls, carotenoids and specific lipids. serves as cofactor.

The protein resides in the plastid. It localises to the chloroplast thylakoid membrane. Its function is as follows. One of the components of the core complex of photosystem II (PSII). It binds chlorophyll and helps catalyze the primary light-induced photochemical processes of PSII. PSII is a light-driven water:plastoquinone oxidoreductase, using light energy to abstract electrons from H(2)O, generating O(2) and a proton gradient subsequently used for ATP formation. This Arabidopsis thaliana (Mouse-ear cress) protein is Photosystem II CP47 reaction center protein.